The primary structure comprises 420 residues: Gamma-glutamyl phosphate reductase (420 aa).

It belongs to the gamma-glutamyl phosphate reductase family.

The protein resides in the cytoplasm. The enzyme catalyses L-glutamate 5-semialdehyde + phosphate + NADP(+) = L-glutamyl 5-phosphate + NADPH + H(+). It participates in amino-acid biosynthesis; L-proline biosynthesis; L-glutamate 5-semialdehyde from L-glutamate: step 2/2. In terms of biological role, catalyzes the NADPH-dependent reduction of L-glutamate 5-phosphate into L-glutamate 5-semialdehyde and phosphate. The product spontaneously undergoes cyclization to form 1-pyrroline-5-carboxylate. This is Gamma-glutamyl phosphate reductase from Streptococcus pneumoniae (strain ATCC 700669 / Spain 23F-1).